The primary structure comprises 431 residues: Glucose-1-phosphate adenylyltransferase (431 aa).

Residue lysine 39 participates in beta-D-fructose 1,6-bisphosphate binding. AMP is bound by residues arginine 40, histidine 46, and arginine 52. Residues tyrosine 114, glycine 179, 194–195, and serine 212 contribute to the alpha-D-glucose 1-phosphate site; that span reads EK. The AMP site is built by glutamate 370 and arginine 386. Beta-D-fructose 1,6-bisphosphate is bound by residues 419-423 and 429-431; these read REMLR and QER.

Belongs to the bacterial/plant glucose-1-phosphate adenylyltransferase family. In terms of assembly, homotetramer.

The catalysed reaction is alpha-D-glucose 1-phosphate + ATP + H(+) = ADP-alpha-D-glucose + diphosphate. Its pathway is glycan biosynthesis; glycogen biosynthesis. Allosterically activated by fructose-1,6-bisphosphate (F16BP) and inhibited by AMP. In terms of biological role, involved in the biosynthesis of ADP-glucose, a building block required for the elongation reactions to produce glycogen. Catalyzes the reaction between ATP and alpha-D-glucose 1-phosphate (G1P) to produce pyrophosphate and ADP-Glc. The sequence is that of Glucose-1-phosphate adenylyltransferase from Salmonella typhi.